A 562-amino-acid chain; its full sequence is MRSDMIKKGDQQAPARSLLHATGALDKPTDMNKPFVAICNSYIDIVPGHVHLRELADIAKEAIREAGAIPFEFDTIGVDDGIAMGHIGMRYSLPSREIIADAAETVINAHWFDGVFYIPNCDKITPGMLLASVRTNVPAIFCSGGPMKAGLSSEGKALTLSSMFEAVGAFKDGSISKDEFLDMEQNACPTCGSCSGMFTANSMNCLMEVLGLALPYNGTALAVSDQRREMIREAAFKLVDNIKNDLKPKDIVTREAIDDAFALDMAMGGSTNTVLHTLAIANEAGIDYDLTRINEIAKKTPYLSKIAPSSSYSMHDVHEAGGVPAIINELFKKEGTLHPDRITATGKTLRENNEDKEILNSDVIRHLDNPYDKQGGLSILYGNIAPKGAVIKVGGVDPSIKVFKGKAICFDSHDEAVEAIDNHDVREGHVVVIRYEGPKGGPGMPEMLAPTSSIVGRGLGKDVALITDGRFSGATRGIAVGHISPEAAAGGPIGLINDGDEITIDLTNRTLDVNVSTEELDARKQNVKPFKAKVKTGYLARYTALVTSANTGGIMQVPENLI.

Aspartate 80 contributes to the Mg(2+) binding site. Cysteine 121 is a [2Fe-2S] cluster binding site. Residues aspartate 122 and lysine 123 each contribute to the Mg(2+) site. Lysine 123 carries the N6-carboxylysine modification. Cysteine 194 contributes to the [2Fe-2S] cluster binding site. Glutamate 446 is a binding site for Mg(2+). The Proton acceptor role is filled by serine 472.

Belongs to the IlvD/Edd family. As to quaternary structure, homodimer. The cofactor is [2Fe-2S] cluster. It depends on Mg(2+) as a cofactor.

It carries out the reaction (2R)-2,3-dihydroxy-3-methylbutanoate = 3-methyl-2-oxobutanoate + H2O. It catalyses the reaction (2R,3R)-2,3-dihydroxy-3-methylpentanoate = (S)-3-methyl-2-oxopentanoate + H2O. It functions in the pathway amino-acid biosynthesis; L-isoleucine biosynthesis; L-isoleucine from 2-oxobutanoate: step 3/4. Its pathway is amino-acid biosynthesis; L-valine biosynthesis; L-valine from pyruvate: step 3/4. Functions in the biosynthesis of branched-chain amino acids. Catalyzes the dehydration of (2R,3R)-2,3-dihydroxy-3-methylpentanoate (2,3-dihydroxy-3-methylvalerate) into 2-oxo-3-methylpentanoate (2-oxo-3-methylvalerate) and of (2R)-2,3-dihydroxy-3-methylbutanoate (2,3-dihydroxyisovalerate) into 2-oxo-3-methylbutanoate (2-oxoisovalerate), the penultimate precursor to L-isoleucine and L-valine, respectively. This Staphylococcus saprophyticus subsp. saprophyticus (strain ATCC 15305 / DSM 20229 / NCIMB 8711 / NCTC 7292 / S-41) protein is Dihydroxy-acid dehydratase 1.